A 44-amino-acid chain; its full sequence is Protein PsbN (44 aa).

A helical membrane pass occupies residues 7 to 29; the sequence is VATVFVSCLVLSITGYSLYIGFG.

This sequence belongs to the PsbN family.

It localises to the plastid. The protein resides in the chloroplast thylakoid membrane. In terms of biological role, may play a role in photosystem I and II biogenesis. The sequence is that of Protein PsbN from Nephroselmis olivacea (Green alga).